We begin with the raw amino-acid sequence, 159 residues long: MVRIRIRAIGKIKESFIRDAIADYAKRMCSFCQVECIEYPEAPVPDTHPSTIEMACVSEGEKLCSGIDSLDYVIILDRTGKQVSSEGLAEVIRRCEIEGPYQLVFIIGGPHGLSKDCLQKGNIILSLSAMTFPHQIARLLLYEQLYRAFTIIRGLPYHR.

S-adenosyl-L-methionine is bound by residues Leu-76, Gly-108, and 127-132 (LSAMTF).

Belongs to the RNA methyltransferase RlmH family.

The protein resides in the cytoplasm. It catalyses the reaction pseudouridine(1915) in 23S rRNA + S-adenosyl-L-methionine = N(3)-methylpseudouridine(1915) in 23S rRNA + S-adenosyl-L-homocysteine + H(+). Specifically methylates the pseudouridine at position 1915 (m3Psi1915) in 23S rRNA. This is Putative ribosomal RNA large subunit methyltransferase H from Methanospirillum hungatei JF-1 (strain ATCC 27890 / DSM 864 / NBRC 100397 / JF-1).